The following is a 235-amino-acid chain: MSVHINAAEGQIAETVLLPGDPLRAKYIADTFLEDVVLYNEVRGMYGFTGTYKGKKVSVQGTGMGVPSMSIYANELVQSYGAKNLIRVGTAGGITPDVKVRDVVIAMSASHDMAQNRVRFNGLDYAPTASFDLLHKAYMTAKEHGIDAKVGQIFTTDQFYQDDFHHFKKWADFGCLAIEMEAAGLYTLAAKHKVNALTILTISDHLLTGEETTAEERQTTFNDMMKVALETAIQL.

Histidine 4 contacts a purine D-ribonucleoside. Phosphate is bound by residues glycine 20, arginine 24, arginine 43, and 87 to 90 (RVGT). A purine D-ribonucleoside is bound by residues 179-181 (EME) and 203-204 (SD). Aspartate 204 (proton donor) is an active-site residue.

This sequence belongs to the PNP/UDP phosphorylase family. As to quaternary structure, homohexamer; trimer of homodimers.

The enzyme catalyses a purine D-ribonucleoside + phosphate = a purine nucleobase + alpha-D-ribose 1-phosphate. It catalyses the reaction a purine 2'-deoxy-D-ribonucleoside + phosphate = a purine nucleobase + 2-deoxy-alpha-D-ribose 1-phosphate. Catalyzes the reversible phosphorolytic breakdown of the N-glycosidic bond in the beta-(deoxy)ribonucleoside molecules, with the formation of the corresponding free purine bases and pentose-1-phosphate. The polypeptide is Purine nucleoside phosphorylase DeoD-type (Exiguobacterium sibiricum (strain DSM 17290 / CCUG 55495 / CIP 109462 / JCM 13490 / 255-15)).